Consider the following 156-residue polypeptide: Ribosomal RNA large subunit methyltransferase H (156 aa).

S-adenosyl-L-methionine-binding positions include Leu73, Gly104, and 123–128 (LSPLTL).

Belongs to the RNA methyltransferase RlmH family. Homodimer.

Its subcellular location is the cytoplasm. The catalysed reaction is pseudouridine(1915) in 23S rRNA + S-adenosyl-L-methionine = N(3)-methylpseudouridine(1915) in 23S rRNA + S-adenosyl-L-homocysteine + H(+). Functionally, specifically methylates the pseudouridine at position 1915 (m3Psi1915) in 23S rRNA. The chain is Ribosomal RNA large subunit methyltransferase H from Pectobacterium carotovorum subsp. carotovorum (strain PC1).